The following is a 290-amino-acid chain: Phosphate import ATP-binding protein PstB (290 aa).

The region spanning 43 to 285 is the ABC transporter domain; that stretch reads MSVRNLNVYY…PEHELTEAYI (243 aa). 75 to 82 contacts ATP; it reads GPSGCGKS.

Belongs to the ABC transporter superfamily. Phosphate importer (TC 3.A.1.7) family. In terms of assembly, the complex is composed of two ATP-binding proteins (PstB), two transmembrane proteins (PstC and PstA) and a solute-binding protein (PstS).

The protein localises to the cell inner membrane. The enzyme catalyses phosphate(out) + ATP + H2O = ADP + 2 phosphate(in) + H(+). In terms of biological role, part of the ABC transporter complex PstSACB involved in phosphate import. Responsible for energy coupling to the transport system. This Pseudoalteromonas atlantica (strain T6c / ATCC BAA-1087) protein is Phosphate import ATP-binding protein PstB.